Here is a 156-residue protein sequence, read N- to C-terminus: Small ribosomal subunit protein uS7 (156 aa).

Belongs to the universal ribosomal protein uS7 family. In terms of assembly, part of the 30S ribosomal subunit. Contacts proteins S9 and S11.

In terms of biological role, one of the primary rRNA binding proteins, it binds directly to 16S rRNA where it nucleates assembly of the head domain of the 30S subunit. Is located at the subunit interface close to the decoding center, probably blocks exit of the E-site tRNA. In Nitrosomonas europaea (strain ATCC 19718 / CIP 103999 / KCTC 2705 / NBRC 14298), this protein is Small ribosomal subunit protein uS7.